We begin with the raw amino-acid sequence, 367 residues long: MTNPRVFFEVAIGGKTIGKIYFELFADKVPKTAENFRALCTGEKGNTQAGIPLHFKGSSFHRVIKDFMVQGGDFTAGNGTGGESIYGEKFPDEAFPYPHDQPFLLSMANAGPNTNGSQFFITTTETPHLDNKHVVFGKLLSGKGIVRQIERTETGEQDRPKQPVTIVDCGELPADFQVPVGNVDDGTGDDYEDFLKDNDNVDVNDPASVLGAIEKLKSIGTKLFKEGNAEGALKKYLKATTYLEDYLPDDLSEENIAKVHALRISCYLNVALMALKVNQPKVAIKAATSALDDETVANKEKAKALFRRGSGYAALKNETDALKDLNAALELEPADGAIKNKIEEVKQAAQRRREAEKKKYAGFFGGK.

Positions 7–171 (FFEVAIGGKT…QPVTIVDCGE (165 aa)) constitute a PPIase cyclophilin-type domain. TPR repeat units follow at residues 213–246 (IEKL…LEDY), 264–297 (ISCY…ETVA), and 302–335 (AKAL…EPAD).

It belongs to the cyclophilin-type PPIase family. PPIase D subfamily.

The protein resides in the cytoplasm. The catalysed reaction is [protein]-peptidylproline (omega=180) = [protein]-peptidylproline (omega=0). In terms of biological role, PPIases accelerate the folding of proteins. It catalyzes the cis-trans isomerization of proline imidic peptide bonds in oligopeptides. The polypeptide is Peptidyl-prolyl cis-trans isomerase D (CPR6) (Yarrowia lipolytica (strain CLIB 122 / E 150) (Yeast)).